Consider the following 338-residue polypeptide: 1-aminocyclopropane-1-carboxylate deaminase (338 aa).

Lysine 51 carries the post-translational modification N6-(pyridoxal phosphate)lysine. The Nucleophile role is filled by serine 78.

The protein belongs to the ACC deaminase/D-cysteine desulfhydrase family. Homotrimer. The cofactor is pyridoxal 5'-phosphate.

It catalyses the reaction 1-aminocyclopropane-1-carboxylate + H2O = 2-oxobutanoate + NH4(+). In terms of biological role, catalyzes a cyclopropane ring-opening reaction, the irreversible conversion of 1-aminocyclopropane-1-carboxylate (ACC) to ammonia and alpha-ketobutyrate. Allows growth on ACC as a nitrogen source. This chain is 1-aminocyclopropane-1-carboxylate deaminase, found in Burkholderia cenocepacia (strain HI2424).